We begin with the raw amino-acid sequence, 1083 residues long: Solute carrier family 12 member 7 (1083 aa).

The interval 1-51 (MPTNFTVVPVEARADGAGDEAAERTEEPGSPESADPACPTPGDGNPRENSP) is disordered. Over 1–119 (MPTNFTVVPV…RREIKAPRMG (119 aa)) the chain is Cytoplasmic. A compositionally biased stretch (basic and acidic residues) spans 12-27 (ARADGAGDEAAERTEE). Serine 30, serine 33, serine 50, and serine 62 each carry phosphoserine. Residues 120-142 (TFIGVYLPCLQNILGVILFLRLT) form a discontinuously helical membrane-spanning segment. Residues asparagine 131 and isoleucine 132 each contribute to the K(+) site. Residue valine 135 participates in chloride binding. The Extracellular portion of the chain corresponds to 143 to 149 (WIVGAAG). A helical transmembrane segment spans residues 150–172 (VLESFLIVAMCCTCTMLTAISMS). Topologically, residues 173–196 (AIATNGVVPAGGSYYMISRSLGPE) are cytoplasmic. A helical transmembrane segment spans residues 197-225 (FGGAVGLCFYLGTTFAGAMYILGTIEIFL). The Extracellular portion of the chain corresponds to 226–249 (TYISPSAAIFQAETADGEAAALLN). The next 2 membrane-spanning stretches (helical) occupy residues 250–271 (NMRVYGSCALALMAVVVFVGVK) and 272–300 (YVNKLALVFLACVVLSILAIYAGVIKTAF). Over 301 to 419 (APPDIPVCLL…PYVLTDIMTY (119 aa)) the chain is Extracellular. N-linked (GlcNAc...) asparagine glycosylation is found at asparagine 312, asparagine 331, and asparagine 360. Residues 420–440 (FTMLVGIYFPSVTGIMAGSNR) traverse the membrane as a helical segment. Positions 429 and 432 each coordinate K(+). Proline 429 provides a ligand contact to chloride. Glycine 433 and isoleucine 434 together coordinate chloride. Residues 441–450 (SGDLKDAQKS) lie on the Cytoplasmic side of the membrane. The chain crosses the membrane as a helical span at residues 451-473 (IPTGTILAIVTTSFIYLSCIVLF). Topologically, residues 474 to 504 (GACIEGVVLRDKFGEALQGNLVIGMLAWPSP) are extracellular. The helical transmembrane segment at 505-531 (WVIVIGSFFSTCGAGLQSLTGAPRLLQ) threads the bilayer. The Cytoplasmic portion of the chain corresponds to 532-554 (AIARDGIIPFLQVFGHGKANGEP). The next 2 helical transmembrane spans lie at 555-573 (TWALLLTALICETGILIAS) and 574-598 (LDSVAPILSMFFLMCYMFVNLACAV). Residue tyrosine 589 participates in chloride binding. Residues 599 to 612 (QTLLRTPNWRPRFK) are Cytoplasmic-facing. 2 helical membrane-spanning segments follow: residues 613–635 (FYHWTLSFLGMSLCLALMFICSW) and 636–651 (YYALFAMLIAGCIYKY). Topologically, residues 652–1083 (IEYRGAEKEW…GGREVITIYS (432 aa)) are cytoplasmic. The segment at 664 to 680 (GIRGLSLNAARYALLRV) is scissor helix. A phosphothreonine mark is found at threonine 973 and threonine 980.

Belongs to the SLC12A transporter family. K/Cl co-transporter subfamily. Homodimer; adopts a domain-swap conformation at the scissor helices connecting the transmembrane domain and C-terminal domain. Heterodimer with K-Cl cotransporter SLC12A5. Widely expressed with highest levels in kidney, liver and pancreas. Expressed in choroid plexus and suprachiasmatic nucleus.

The protein resides in the cell membrane. The catalysed reaction is K(+)(in) + chloride(in) = K(+)(out) + chloride(out). Activated by N-ethylmaleimide (NEM). Inhibited by furosemide, DIDS and bumetanide. The inhibition is much stronger in the presence of 50 mM K(+) in the uptake medium. Inhibited by DIOA. Inhibited by WNK3. In terms of biological role, mediates electroneutral potassium-chloride cotransport when activated by cell swelling. May mediate K(+) uptake into Deiters' cells in the cochlea and contribute to K(+) recycling in the inner ear. Important for the survival of cochlear outer and inner hair cells and the maintenance of the organ of Corti. May be required for basolateral Cl(-) extrusion in the kidney and contribute to renal acidification. This chain is Solute carrier family 12 member 7, found in Rattus norvegicus (Rat).